An 83-amino-acid polypeptide reads, in one-letter code: Small ribosomal subunit protein bS16 (83 aa).

The protein belongs to the bacterial ribosomal protein bS16 family.

The protein is Small ribosomal subunit protein bS16 of Cupriavidus taiwanensis (strain DSM 17343 / BCRC 17206 / CCUG 44338 / CIP 107171 / LMG 19424 / R1) (Ralstonia taiwanensis (strain LMG 19424)).